A 507-amino-acid chain; its full sequence is L-threonine dehydratase biosynthetic IlvA (507 aa).

Lysine 52 is subject to N6-(pyridoxal phosphate)lysine. Pyridoxal 5'-phosphate is bound by residues asparagine 79, 182 to 186, and serine 309; that span reads GGGGL. 2 ACT-like domains span residues 333–404 and 427–498; these read AVFA…DLTH and RLFR…EESA.

The protein belongs to the serine/threonine dehydratase family. Homotetramer. The cofactor is pyridoxal 5'-phosphate.

It catalyses the reaction L-threonine = 2-oxobutanoate + NH4(+). Its pathway is amino-acid biosynthesis; L-isoleucine biosynthesis; 2-oxobutanoate from L-threonine: step 1/1. Catalyzes the anaerobic formation of alpha-ketobutyrate and ammonia from threonine in a two-step reaction. The first step involved a dehydration of threonine and a production of enamine intermediates (aminocrotonate), which tautomerizes to its imine form (iminobutyrate). Both intermediates are unstable and short-lived. The second step is the nonenzymatic hydrolysis of the enamine/imine intermediates to form 2-ketobutyrate and free ammonia. In the low water environment of the cell, the second step is accelerated by RidA. The sequence is that of L-threonine dehydratase biosynthetic IlvA (ilvA) from Burkholderia multivorans (strain ATCC 17616 / 249).